Consider the following 161-residue polypeptide: Endoribonuclease YbeY (161 aa).

Residues His121, His125, and His131 each contribute to the Zn(2+) site.

The protein belongs to the endoribonuclease YbeY family. The cofactor is Zn(2+).

The protein resides in the cytoplasm. Its function is as follows. Single strand-specific metallo-endoribonuclease involved in late-stage 70S ribosome quality control and in maturation of the 3' terminus of the 16S rRNA. This chain is Endoribonuclease YbeY, found in Xanthomonas campestris pv. campestris (strain 8004).